The primary structure comprises 308 residues: Transmembrane and ubiquitin-like domain-containing protein 1 (308 aa).

A helical membrane pass occupies residues 11 to 31; that stretch reads VTVLFALVLFFMVLMLAWVST. The disordered stretch occupies residues 39-162; the sequence is THWIRPEPAQ…GLGDGTTAQS (124 aa). Polar residues predominate over residues 63–93; the sequence is PSQTLTNADPNSETVDSSDSTQSSREFQNAG. The span at 103–115 shows a compositional bias: low complexity; it reads SSSGSTVSTGGSV. A compositionally biased stretch (polar residues) spans 132–149; the sequence is PNFTVSSRDPQAGASSSL. The Ubiquitin-like domain maps to 169–242; sequence IHLRLKFLND…LHCHISQHAS (74 aa). The next 2 membrane-spanning stretches (helical) occupy residues 253-273 and 283-303; these read VPLNVGNLLVPLLFLIVMLLW and FTGTATACLGGFTLLISAIAF.

Its subcellular location is the membrane. It localises to the cytoplasm. It is found in the nucleus. In terms of biological role, may contribute to the regulation of translation during cell-cycle progression. May contribute to the regulation of cell proliferation. The membrane form is involved in sterol-regulated ubiquitination and degradation of HMG-CoA reductase HMGCR. May be involved in centrosome assembly. The sequence is that of Transmembrane and ubiquitin-like domain-containing protein 1 (tmub1) from Xenopus laevis (African clawed frog).